Consider the following 228-residue polypeptide: UPF0173 metal-dependent hydrolase ABC2731 (228 aa).

This sequence belongs to the UPF0173 family.

The sequence is that of UPF0173 metal-dependent hydrolase ABC2731 from Shouchella clausii (strain KSM-K16) (Alkalihalobacillus clausii).